The following is a 229-amino-acid chain: MAKKGKNYLEAAKQVDATKAYTVEEAIDLVKKVDFAKFDASLEVAYRLNVDPKQADQQIRGAVVLPNGTGKTQRVIVFAQGEQAKQAEAAGADVVGAEDLVEKIQGGWLDFDVAVATPPMMAQVGRLGRVLGPKGLMPNPKTGTVTMDVTKAVNDIKAGQVAYRVDKAGIVHAPIGKVSFDAAKLVENFKAMQDVIIKARPASAKGQYITSLSVSSTFGPGVKVDVASF.

The protein belongs to the universal ribosomal protein uL1 family. Part of the 50S ribosomal subunit.

Functionally, binds directly to 23S rRNA. The L1 stalk is quite mobile in the ribosome, and is involved in E site tRNA release. In terms of biological role, protein L1 is also a translational repressor protein, it controls the translation of the L11 operon by binding to its mRNA. This Latilactobacillus sakei subsp. sakei (strain 23K) (Lactobacillus sakei subsp. sakei) protein is Large ribosomal subunit protein uL1.